Here is a 287-residue protein sequence, read N- to C-terminus: MERSVTAGKWLAYCRLMRIDKPIGSLLLLWPTLWALWLAGGGAPAPWTLFVFVAGVFLMRAAGCVINDYADRHFDGHVKRTASRPLPSGEVSEQSAKVLFVVLVLLAFGLVLTLNTMTIWLSVAGLGLAWVYPFMKRVSHLPQFVLGAAFGWSIPMAYAAVSESLPATCWMMFLAYICWTVAYDTQYAMVDRDDDLKIGVKSTAILFGRFDNLIIGLLQFSMLALLLILGTMTGLGMPYYISLLVAGGMFIYQQILTAGRERDACFKAFHNNKYAGMAIFIGVLFGL.

The next 7 membrane-spanning stretches (helical) occupy residues 23–40, 99–119, 141–161, 163–183, 213–233, 235–255, and 266–286; these read IGSLLLLWPTLWALWLAG, LFVVLVLLAFGLVLTLNTMTI, LPQFVLGAAFGWSIPMAYAAV, ESLPATCWMMFLAYICWTVAY, LIIGLLQFSMLALLLILGTMT, LGMPYYISLLVAGGMFIYQQI, and FKAFHNNKYAGMAIFIGVLFG.

Belongs to the UbiA prenyltransferase family. It depends on Mg(2+) as a cofactor.

It localises to the cell inner membrane. It carries out the reaction all-trans-octaprenyl diphosphate + 4-hydroxybenzoate = 4-hydroxy-3-(all-trans-octaprenyl)benzoate + diphosphate. The protein operates within cofactor biosynthesis; ubiquinone biosynthesis. Functionally, catalyzes the prenylation of para-hydroxybenzoate (PHB) with an all-trans polyprenyl group. Mediates the second step in the final reaction sequence of ubiquinone-8 (UQ-8) biosynthesis, which is the condensation of the polyisoprenoid side chain with PHB, generating the first membrane-bound Q intermediate 3-octaprenyl-4-hydroxybenzoate. This chain is 4-hydroxybenzoate octaprenyltransferase, found in Pectobacterium carotovorum subsp. carotovorum (strain PC1).